The sequence spans 326 residues: Balbiani ring protein 1 (326 aa).

The segment covering 1-33 (PSKSGPRPSKSGPRPSKSGPRPSKSGPRPSKSG) has biased composition (low complexity). Positions 1-119 (PSKSGPRPSK…RESPVCDDAM (119 aa)) are disordered. Residues 34-51 (PRPEKCGSAMRKAEAEKC) show a composition bias toward basic and acidic residues. Residues 93–102 (VTPTPEVPTT) show a composition bias toward low complexity. Basic and acidic residues predominate over residues 107–119 (SESRESPVCDDAM).

Salivary gland.

The protein localises to the secreted. Its function is as follows. Used by the larvae to construct a supramolecular structure, the larval tube. In Chironomus pallidivittatus (Midge), this protein is Balbiani ring protein 1 (BR1).